The sequence spans 72 residues: Cell division protein ZapB (72 aa).

Positions 1–71 form a coiled coil; sequence MSLEILDQLE…LRSLLGRIDN (71 aa). The segment at 36–56 is disordered; the sequence is LSRQTNEQLRSENEHLKTEHH. The span at 44-56 shows a compositional bias: basic and acidic residues; it reads LRSENEHLKTEHH.

It belongs to the ZapB family. In terms of assembly, homodimer. The ends of the coiled-coil dimer bind to each other, forming polymers. Interacts with FtsZ.

It localises to the cytoplasm. Non-essential, abundant cell division factor that is required for proper Z-ring formation. It is recruited early to the divisome by direct interaction with FtsZ, stimulating Z-ring assembly and thereby promoting cell division earlier in the cell cycle. Its recruitment to the Z-ring requires functional FtsA or ZipA. This chain is Cell division protein ZapB, found in Histophilus somni (strain 129Pt) (Haemophilus somnus).